Reading from the N-terminus, the 442-residue chain is DDB1- and CUL4-associated factor 12-B (442 aa).

Over residues 1 to 13 (MTRRPVSRKRRAT) the composition is skewed to basic residues. Residues 1–31 (MTRRPVSRKRRATHGTGPGEQSDWDHSAHKR) form a disordered region. WD repeat units follow at residues 132 to 173 (SHQS…PVCV), 177 to 215 (GHNDWIFSIAWISDTMAVSGSRDGFMALWEMTDEVVNKR), 245 to 284 (PVNCKVRALAFNGNNKELGAVSLDGFFHLWKAEQTLSKLL), and 333 to 370 (EQGSGIRSVSFYEHIVTVGTGQGALLFYDIRAQRFLED).

The protein belongs to the WD repeat DCAF12 family. Component of the DCX(DCAF12) E3 ubiquitin ligase complex, at least composed of cul4 (cul4a or cul4b), ddb1, dcaf12 and rbx1.

The protein resides in the cytoplasm. It is found in the cytoskeleton. It localises to the microtubule organizing center. The protein localises to the centrosome. Its subcellular location is the nucleus. It participates in protein modification; protein ubiquitination. Functionally, substrate-recognition component of a DCX (DDB1-CUL4-X-box) E3 ubiquitin-protein ligase complex of the DesCEND (destruction via C-end degrons) pathway, which recognizes a C-degron located at the extreme C terminus of target proteins, leading to their ubiquitination and degradation. The C-degron recognized by the DesCEND pathway is usually a motif of less than ten residues and can be present in full-length proteins, truncated proteins or proteolytically cleaved forms. The DCX(DCAF12) complex specifically recognizes proteins with a diglutamate (Glu-Glu) at the C-terminus leading to their ubiquitination and degradation. Also directly recognizes the C-terminal glutamate-leucine (Glu-Leu) degron as an alternative degron in proteins leading to their ubiquitination and degradation. The sequence is that of DDB1- and CUL4-associated factor 12-B (dcaf12-b) from Xenopus laevis (African clawed frog).